Here is a 241-residue protein sequence, read N- to C-terminus: Triosephosphate isomerase (241 aa).

Substrate is bound at residue 9-11 (NWK). The Electrophile role is filled by His96. The active-site Proton acceptor is the Glu165. Substrate is bound by residues Gly171, Ser204, and 225 to 226 (GG).

It belongs to the triosephosphate isomerase family. As to quaternary structure, homodimer.

The protein localises to the cytoplasm. It carries out the reaction D-glyceraldehyde 3-phosphate = dihydroxyacetone phosphate. It participates in carbohydrate biosynthesis; gluconeogenesis. The protein operates within carbohydrate degradation; glycolysis; D-glyceraldehyde 3-phosphate from glycerone phosphate: step 1/1. In terms of biological role, involved in the gluconeogenesis. Catalyzes stereospecifically the conversion of dihydroxyacetone phosphate (DHAP) to D-glyceraldehyde-3-phosphate (G3P). This is Triosephosphate isomerase from Prochlorococcus marinus (strain MIT 9312).